The sequence spans 252 residues: Carboxy-S-adenosyl-L-methionine synthase (252 aa).

S-adenosyl-L-methionine-binding positions include Tyr45, 70–72, 95–96, 127–128, Asn142, and Arg209; these read GCS, DN, and DI.

This sequence belongs to the class I-like SAM-binding methyltransferase superfamily. Cx-SAM synthase family. Homodimer.

The catalysed reaction is prephenate + S-adenosyl-L-methionine = carboxy-S-adenosyl-L-methionine + 3-phenylpyruvate + H2O. Functionally, catalyzes the conversion of S-adenosyl-L-methionine (SAM) to carboxy-S-adenosyl-L-methionine (Cx-SAM). This is Carboxy-S-adenosyl-L-methionine synthase from Pseudomonas paraeruginosa (strain DSM 24068 / PA7) (Pseudomonas aeruginosa (strain PA7)).